A 391-amino-acid chain; its full sequence is F-box/kelch-repeat protein At4g05080 (391 aa).

The region spanning 2–49 is the F-box domain; that stretch reads TMMFDLTQDLVKEILSRVPITSLGAVRSTCKGWNALSKDRILCKAKPK. Kelch repeat units lie at residues 100 to 143 and 144 to 194; these read HMYY…TFCL and RYDN…SASV. Residues 369–385 are compositionally biased toward basic residues; that stretch reads RRRRERNSKRKEKKRKG. Positions 369 to 391 are disordered; that stretch reads RRRRERNSKRKEKKRKGTTNNKV.

In Arabidopsis thaliana (Mouse-ear cress), this protein is F-box/kelch-repeat protein At4g05080.